Reading from the N-terminus, the 1377-residue chain is DNA-directed RNA polymerase subunit beta (1377 aa).

The protein belongs to the RNA polymerase beta chain family. In terms of assembly, the RNAP catalytic core consists of 2 alpha, 1 beta, 1 beta' and 1 omega subunit. When a sigma factor is associated with the core the holoenzyme is formed, which can initiate transcription.

The enzyme catalyses RNA(n) + a ribonucleoside 5'-triphosphate = RNA(n+1) + diphosphate. Its function is as follows. DNA-dependent RNA polymerase catalyzes the transcription of DNA into RNA using the four ribonucleoside triphosphates as substrates. The polypeptide is DNA-directed RNA polymerase subunit beta (Brucella suis biovar 1 (strain 1330)).